Reading from the N-terminus, the 1609-residue chain is Laminin subunit gamma-1 (1609 aa).

The first 33 residues, 1–33, serve as a signal peptide directing secretion; that stretch reads MRGSHRAAPALRPRGRLWPVLAVLAAAAAAGCA. The Laminin N-terminal domain occupies 46 to 285; that stretch reads RPQRCMPEFV…AISDFAVGGR (240 aa). N-linked (GlcNAc...) asparagine glycosylation is found at Asn-60 and Asn-134. 16 disulfides stabilise this stretch: Cys-286/Cys-295, Cys-288/Cys-305, Cys-307/Cys-316, Cys-319/Cys-339, Cys-342/Cys-351, Cys-344/Cys-367, Cys-370/Cys-379, Cys-382/Cys-395, Cys-398/Cys-410, Cys-400/Cys-416, Cys-418/Cys-427, Cys-430/Cys-442, Cys-445/Cys-456, Cys-447/Cys-463, Cys-465/Cys-474, and Cys-477/Cys-492. Laminin EGF-like domains lie at 286–341, 342–397, 398–444, and 445–494; these read CKCN…ECLP, CDCN…ACSS, CHCS…GCRP, and CSCD…GCTP. A Laminin EGF-like 5; first part domain is found at 495–504; that stretch reads CFCFGHSSVC. Residues 514 to 689 form the Laminin IV type A domain; sequence SISSTFQIDE…PGVPATWVES (176 aa). N-linked (GlcNAc...) asparagine glycosylation is found at Asn-576 and Asn-650. The Laminin EGF-like 5; second part domain maps to 690–723; sequence CTCPVGYGGQFCEMCLSGYRRETPNLGPYSPCVL. 24 disulfides stabilise this stretch: Cys-724–Cys-733, Cys-726–Cys-740, Cys-742–Cys-751, Cys-754–Cys-770, Cys-773–Cys-781, Cys-775–Cys-792, Cys-795–Cys-804, Cys-807–Cys-825, Cys-828–Cys-842, Cys-830–Cys-849, Cys-852–Cys-861, Cys-864–Cys-881, Cys-884–Cys-898, Cys-886–Cys-905, Cys-907–Cys-916, Cys-919–Cys-932, Cys-935–Cys-947, Cys-937–Cys-954, Cys-956–Cys-965, Cys-968–Cys-980, Cys-983–Cys-995, Cys-985–Cys-1001, Cys-1003–Cys-1012, and Cys-1015–Cys-1028. Laminin EGF-like domains follow at residues 724–772, 773–827, 828–883, 884–934, 935–982, and 983–1030; these read CACN…DCQP, CPCP…LCRL, CQCS…KCKA, CNCN…GCER, CDCH…GCKP, and CDCH…GCQE. Asn-1022 and Asn-1107 each carry an N-linked (GlcNAc...) asparagine glycan. The domain II and I stretch occupies residues 1030 to 1609; that stretch reads ECPACYRLVK…CFNTPSIEKP (580 aa). Residues 1038–1609 are a coiled coil; it reads VKDKVADHRV…CFNTPSIEKP (572 aa). Ser-1149 carries the phosphoserine; by FAM20C modification. N-linked (GlcNAc...) asparagine glycans are attached at residues Asn-1161, Asn-1175, Asn-1205, Asn-1223, Asn-1241, Asn-1380, Asn-1395, and Asn-1439. Position 1493 is a phosphoserine (Ser-1493).

As to quaternary structure, laminin is a complex glycoprotein, consisting of three different polypeptide chains (alpha, beta, gamma), which are bound to each other by disulfide bonds into a cross-shaped molecule comprising one long and three short arms with globules at each end. Gamma-1 is a subunit of laminin-1 (laminin-111 or EHS laminin), laminin-2 (laminin-211 or merosin), laminin-3 (laminin-121 or S-laminin), laminin-4 (laminin-221 or S-merosin), laminin-6 (laminin-311 or K-laminin), laminin-7 (laminin-321 or KS-laminin), laminin-8 (laminin-411), laminin-9 (laminin-421), laminin-10 (laminin-511) and laminin-11 (laminin-521). Interacts with SVEP1. As to expression, found in the basement membranes (major component).

It is found in the secreted. The protein resides in the extracellular space. It localises to the extracellular matrix. The protein localises to the basement membrane. Functionally, binding to cells via a high affinity receptor, laminin is thought to mediate the attachment, migration and organization of cells into tissues during embryonic development by interacting with other extracellular matrix components. The chain is Laminin subunit gamma-1 from Homo sapiens (Human).